Here is a 235-residue protein sequence, read N- to C-terminus: Ribonuclease 3 (235 aa).

In terms of domain architecture, RNase III spans 7–131 (LSALEARIGH…IIGAVFLDGG (125 aa)). E45 contributes to the Mg(2+) binding site. D49 is a catalytic residue. Residues D117 and E120 each coordinate Mg(2+). The active site involves E120. Positions 156–225 (DPKTTLQEWA…AAAFLTREKI (70 aa)) constitute a DRBM domain.

This sequence belongs to the ribonuclease III family. As to quaternary structure, homodimer. Mg(2+) serves as cofactor.

Its subcellular location is the cytoplasm. It catalyses the reaction Endonucleolytic cleavage to 5'-phosphomonoester.. In terms of biological role, digests double-stranded RNA. Involved in the processing of primary rRNA transcript to yield the immediate precursors to the large and small rRNAs (23S and 16S). Processes some mRNAs, and tRNAs when they are encoded in the rRNA operon. Processes pre-crRNA and tracrRNA of type II CRISPR loci if present in the organism. The sequence is that of Ribonuclease 3 from Methylocella silvestris (strain DSM 15510 / CIP 108128 / LMG 27833 / NCIMB 13906 / BL2).